The chain runs to 483 residues: MKGLIARFIAGFALLLWAWDMVFPWQQLMQAEENRYNQIQQRKILRVGMVNHPLSYFIGAEGTAGIEYELAKSFANYLDVRLDIKTFDNSEQLFSALKDNKVDIAAAGLLYQPELSKQFQIGSAYYSASWQVVYKKGSNRPYKLSELEGDLIIPAGSAVLPILQRLKEDNPKLSWQTTNQFTQEELLLQVAEGKIPYTVGVSVDISAAQHIRPNIAVGFDLTDEAPVLWYLPNSSYSELQAAVLDFMNHANETGLISRIEEKYFNHLAHFDYVDIQSYLKAIKLVLPKYQSLFEKYCGDLEWQMLAAIAYQESHWDPNATSPTGVRGMMMLTRDTAERMKITDRTSAEQSIRAGSEYLHMLMRQIPETVPKEDRIWYGLAAYNMGLGHLLDVRRLTRQLGGNPDNWLDVKKNLPLLAEKRHYSGLKYGYARGFEAFQYVENIRRYYSSIINHQRVEEQQIQNNEEQPSVPQEISKESDSTLKE.

The first 18 residues, 1 to 18 (MKGLIARFIAGFALLLWA), serve as a signal peptide directing secretion. Positions 19 to 267 (WDMVFPWQQL…RIEEKYFNHL (249 aa)) are non-LT domain. The tract at residues 269–483 (HFDYVDIQSY…SKESDSTLKE (215 aa)) is LT domain. Glu312 is an active-site residue. A disordered region spans residues 458–483 (QQIQNNEEQPSVPQEISKESDSTLKE). The segment covering 473–483 (ISKESDSTLKE) has biased composition (basic and acidic residues).

It in the N-terminal section; belongs to the bacterial solute-binding protein 3 family. In the C-terminal section; belongs to the transglycosylase Slt family.

It localises to the cell outer membrane. The enzyme catalyses Exolytic cleavage of the (1-&gt;4)-beta-glycosidic linkage between N-acetylmuramic acid (MurNAc) and N-acetylglucosamine (GlcNAc) residues in peptidoglycan, from either the reducing or the non-reducing ends of the peptidoglycan chains, with concomitant formation of a 1,6-anhydrobond in the MurNAc residue.. Its function is as follows. Murein-degrading enzyme that degrades murein glycan strands and insoluble, high-molecular weight murein sacculi, with the concomitant formation of a 1,6-anhydromuramoyl product. Lytic transglycosylases (LTs) play an integral role in the metabolism of the peptidoglycan (PG) sacculus. Their lytic action creates space within the PG sacculus to allow for its expansion as well as for the insertion of various structures such as secretion systems and flagella. This chain is Membrane-bound lytic murein transglycosylase F, found in Actinobacillus pleuropneumoniae serotype 5b (strain L20).